The primary structure comprises 245 residues: tRNA (guanine-N(1)-)-methyltransferase (245 aa).

S-adenosyl-L-methionine contacts are provided by residues Gly-111 and 130 to 135; that span reads IGDYVL.

It belongs to the RNA methyltransferase TrmD family. Homodimer.

It is found in the cytoplasm. It catalyses the reaction guanosine(37) in tRNA + S-adenosyl-L-methionine = N(1)-methylguanosine(37) in tRNA + S-adenosyl-L-homocysteine + H(+). In terms of biological role, specifically methylates guanosine-37 in various tRNAs. The chain is tRNA (guanine-N(1)-)-methyltransferase from Dictyoglomus turgidum (strain DSM 6724 / Z-1310).